We begin with the raw amino-acid sequence, 98 residues long: Co-chaperonin GroES (98 aa).

It belongs to the GroES chaperonin family. As to quaternary structure, heptamer of 7 subunits arranged in a ring. Interacts with the chaperonin GroEL.

Its subcellular location is the cytoplasm. In terms of biological role, together with the chaperonin GroEL, plays an essential role in assisting protein folding. The GroEL-GroES system forms a nano-cage that allows encapsulation of the non-native substrate proteins and provides a physical environment optimized to promote and accelerate protein folding. GroES binds to the apical surface of the GroEL ring, thereby capping the opening of the GroEL channel. The sequence is that of Co-chaperonin GroES from Allorhizobium ampelinum (strain ATCC BAA-846 / DSM 112012 / S4) (Agrobacterium vitis (strain S4)).